Here is a 499-residue protein sequence, read N- to C-terminus: Thioredoxin reductase 1, cytoplasmic (499 aa).

FAD-binding positions include Ile-18 to Gly-23, Asp-42 to Phe-43, Thr-58 to Cys-59, and Gly-63 to Lys-67. Cys-59 and Cys-64 form a disulfide bridge. Residue Lys-68 is modified to N6-succinyllysine. Phosphotyrosine is present on Tyr-131. FAD contacts are provided by residues Tyr-131–Gly-132 and Thr-161. NADP(+) is bound by residues Arg-166, Ala-198–Glu-204, Arg-221–Ser-222, Arg-226, Arg-226–Phe-228, Val-291–Arg-293, and Lys-315. Tyr-200 lines the FAD pocket. Residues Asp-334, Glu-341–Thr-343, and His-472 each bind FAD. Glu-341 is a binding site for NADP(+). His-472 functions as the Proton acceptor in the catalytic mechanism. Positions Cys-497–Sec-498 form a cross-link, cysteinyl-selenocysteine (Cys-Sec). Sec-498 is a non-standard amino acid (selenocysteine).

Belongs to the class-I pyridine nucleotide-disulfide oxidoreductase family. In terms of assembly, homodimer. It depends on FAD as a cofactor. In terms of processing, ISGylated.

The protein localises to the cytoplasm. It carries out the reaction [thioredoxin]-dithiol + NADP(+) = [thioredoxin]-disulfide + NADPH + H(+). The enzyme catalyses H2O2 + NADPH + H(+) = NADP(+) + 2 H2O. Reduces disulfideprotein thioredoxin (Trx) to its dithiol-containing form. Homodimeric flavoprotein involved in the regulation of cellular redox reactions, growth and differentiation. Contains a selenocysteine residue at the C-terminal active site that is essential for catalysis. Also has reductase activity on hydrogen peroxide (H2O2). The chain is Thioredoxin reductase 1, cytoplasmic from Rattus norvegicus (Rat).